A 156-amino-acid chain; its full sequence is MPRKGPVPKRDVLPDPIYNSKLVTRLINKIMIDGKKGKAQKILYTAFDIIRERTGKDPMEVFEQALKNVMPVLEVRARRVGGANYQVPVEVRPERRTTLGLRWLVNYARLRGEKTMEERLANEIMDAANNTGAAVKKREDTHKMAEANKAFAHYRW.

This sequence belongs to the universal ribosomal protein uS7 family. Part of the 30S ribosomal subunit. Contacts proteins S9 and S11.

One of the primary rRNA binding proteins, it binds directly to 16S rRNA where it nucleates assembly of the head domain of the 30S subunit. Is located at the subunit interface close to the decoding center, probably blocks exit of the E-site tRNA. This chain is Small ribosomal subunit protein uS7, found in Anoxybacillus flavithermus (strain DSM 21510 / WK1).